Consider the following 131-residue polypeptide: Serum amyloid A-3 protein (131 aa).

Residues 1-18 (MNLSTGIIFCFLILGVSS) form the signal peptide. The span at 94-105 (MTRDQVREDSKA) shows a compositional bias: basic and acidic residues. Residues 94–131 (MTRDQVREDSKADQFANEWGRSGKDPNHFRPAGLPDKY) are disordered.

This sequence belongs to the SAA family. As to expression, expressed in the liver. Expressed in mammary epithelial cells. Expressed at high levels in mammary ductal cells and vesicle engorged alveoli, but absent from stromal and connective tissue and leukocytes. Secreted into colostrum and mastitic milk (at protein level). Low expression levels, if any, in normal milk (at protein level).

The protein resides in the secreted. Functionally, major acute phase reactant. Apolipoprotein of the HDL complex. May have a role in protection of the mammary gland during remodeling and infection. In vitro exhibits antimicrobial activity against Escherichia coli, Streptococcus uberis and Pseudomonas aeruginosa. This is Serum amyloid A-3 protein (SAA3) from Bos taurus (Bovine).